Consider the following 200-residue polypeptide: Ribonuclease HII (200 aa).

The RNase H type-2 domain maps to 14–200 (SRLAGVDEVG…FAPVKQWQLL (187 aa)). A divalent metal cation-binding residues include aspartate 20, glutamate 21, and aspartate 112.

This sequence belongs to the RNase HII family. Mn(2+) serves as cofactor. Mg(2+) is required as a cofactor.

The protein resides in the cytoplasm. The catalysed reaction is Endonucleolytic cleavage to 5'-phosphomonoester.. Endonuclease that specifically degrades the RNA of RNA-DNA hybrids. The polypeptide is Ribonuclease HII (Chromohalobacter salexigens (strain ATCC BAA-138 / DSM 3043 / CIP 106854 / NCIMB 13768 / 1H11)).